A 940-amino-acid chain; its full sequence is UvrABC system protein A (940 aa).

ATP is bound at residue 31–38 (GLSGSGKS). The C4-type zinc-finger motif lies at 252 to 279 (CPQCGYSMQELEPRLFSFNNPAGACGTC). ABC transporter domains lie at 309 to 586 (WDQK…PNSL) and 606 to 936 (RDPK…RFLK). 639–646 (GVSGSGKS) contacts ATP. A C4-type zinc finger spans residues 739-765 (CEACQGDGVIKVEMHFLPDVYVPCDVC).

Belongs to the ABC transporter superfamily. UvrA family. Forms a heterotetramer with UvrB during the search for lesions.

It localises to the cytoplasm. In terms of biological role, the UvrABC repair system catalyzes the recognition and processing of DNA lesions. UvrA is an ATPase and a DNA-binding protein. A damage recognition complex composed of 2 UvrA and 2 UvrB subunits scans DNA for abnormalities. When the presence of a lesion has been verified by UvrB, the UvrA molecules dissociate. This is UvrABC system protein A from Vibrio parahaemolyticus serotype O3:K6 (strain RIMD 2210633).